Reading from the N-terminus, the 400-residue chain is MIIKPKIRGFICTTTHPVGCEANVKEQIELTKAKGKIANGPKRVLVVGSSSGYGLSSRIAAAFGSDAATLGVFFEKPSSETKPGTAGWYNTAAFDKFAKAEGLYSKSINCDAFSHEAKKKAIELIKEDLGQVDMVVYSLASPVRKLPDSGELIRSSLKPIGETYTATAVDTNKDCIIQTSVEPATEQEIADTVTVMGGEDWELWINALSDAGVLSDNCKTVAYSYIGTELTWPIYWHGALGKAKMDLDRAAHALNDKLAVKGGSANVAVLKSVVTQASSAIPVMPLYIAMVFKKMRQEGLHEGCMDQIYRMFSERLYRTDGAAPATDDKQRLRLDDWELREDIQQHCRDLWPQVTTENLSELADYMEYKAEFLKLFGFGIEGIDYDADVNPNVSFDVIEL.

Residues 48 to 53 (GSSSGY), 74 to 75 (FE), 111 to 112 (DA), and 139 to 140 (LA) each bind NAD(+). Tyrosine 225 contributes to the substrate binding site. Catalysis depends on tyrosine 235, which acts as the Proton donor. NAD(+) contacts are provided by residues lysine 244 and 273-275 (VVT).

This sequence belongs to the TER reductase family. Monomer.

It carries out the reaction a 2,3-saturated acyl-[ACP] + NAD(+) = a (2E)-enoyl-[ACP] + NADH + H(+). The protein operates within lipid metabolism; fatty acid biosynthesis. Functionally, involved in the final reduction of the elongation cycle of fatty acid synthesis (FAS II). Catalyzes the reduction of a carbon-carbon double bond in an enoyl moiety that is covalently linked to an acyl carrier protein (ACP). The sequence is that of Enoyl-[acyl-carrier-protein] reductase [NADH] from Shewanella denitrificans (strain OS217 / ATCC BAA-1090 / DSM 15013).